A 114-amino-acid chain; its full sequence is Iron-sulfur cluster insertion protein ErpA (114 aa).

The iron-sulfur cluster site is built by cysteine 42, cysteine 106, and cysteine 108.

This sequence belongs to the HesB/IscA family. In terms of assembly, homodimer. The cofactor is iron-sulfur cluster.

Required for insertion of 4Fe-4S clusters for at least IspG. The protein is Iron-sulfur cluster insertion protein ErpA of Haemophilus influenzae (strain PittGG).